A 104-amino-acid polypeptide reads, in one-letter code: BLOC-1-related complex subunit 7 (104 aa).

It belongs to the BORCS7 family.

Its subcellular location is the lysosome membrane. As part of a BORC-like complex may play a role in lysosomes movement and localization at the cell periphery. Associated with the cytosolic face of lysosomes, this complex may couple lysosomes to microtubule plus-end-directed kinesin motor. This chain is BLOC-1-related complex subunit 7, found in Xenopus tropicalis (Western clawed frog).